A 70-amino-acid polypeptide reads, in one-letter code: Mu-conotoxin-like Am3.4 (70 aa).

Positions 1–20 are cleaved as a signal peptide; sequence MMYKLGVLLIICLLLFPLTA. Positions 21–53 are excised as a propeptide; sequence VPQDGDQPADRPAERMQDDISFEHDRFFDPVKR. Disulfide bonds link Cys-54–Cys-69, Cys-55–Cys-65, and Cys-61–Cys-68. Pro-67 carries the post-translational modification 4-hydroxyproline; partial; in major form. Cys-69 is subject to Cysteine amide.

This sequence belongs to the conotoxin M superfamily. Contains 3 disulfide bonds. Expressed by the venom duct.

The protein localises to the secreted. Its function is as follows. Mu-conotoxins block voltage-gated sodium channels (Nav). The protein is Mu-conotoxin-like Am3.4 of Conus amadis (Amadis cone).